The primary structure comprises 386 residues: D(1)-like dopamine receptor (386 aa).

A compositionally biased stretch (polar residues) spans Met-1 to Thr-10. Residues Met-1 to Arg-28 are disordered. Topologically, residues Met-1 to Arg-35 are extracellular. A helical transmembrane segment spans residues Ala-36–Val-56. At Cys-57 to Asn-72 the chain is on the cytoplasmic side. The chain crosses the membrane as a helical span at residues Ala-73–Trp-92. Residues Arg-93–Asp-109 are Extracellular-facing. Cys-108 and Cys-188 are oxidised to a cystine. The helical transmembrane segment at Thr-110–Met-131 threads the bilayer. At Asp-132 to Arg-150 the chain is on the cytoplasmic side. A helical transmembrane segment spans residues Phe-151–Trp-175. The Extracellular segment spans residues His-176–Thr-195. 2 N-linked (GlcNAc...) asparagine glycosylation sites follow: Asn-189 and Asn-193. Residues Tyr-196–Phe-220 traverse the membrane as a helical segment. Over Arg-221–Thr-266 the chain is Cytoplasmic. The helical transmembrane segment at Leu-267–Arg-292 threads the bilayer. At Leu-293–Thr-305 the chain is on the extracellular side. The helical transmembrane segment at Phe-306–Ala-325 threads the bilayer. Residues Phe-326 to Leu-386 are Cytoplasmic-facing.

This sequence belongs to the G-protein coupled receptor 1 family.

It localises to the cell membrane. Its subcellular location is the cell projection. The protein localises to the cilium membrane. In terms of biological role, this is one of the five types (D1 to D5) of receptors for dopamine. The activity of this receptor is mediated by G proteins which activate adenylyl cyclase. This Oreochromis mossambicus (Mozambique tilapia) protein is D(1)-like dopamine receptor.